The sequence spans 913 residues: Polyribonucleotide nucleotidyltransferase (913 aa).

The disordered stretch occupies residues 407 to 427 (YMHNYEMPPYSTGETGRVGSP). Asp521 and Asp527 together coordinate Mg(2+). The region spanning 587-646 (PRIITTSVPVEKIGEVIGPKGKMINQIQEDTGAEIAIEDDGTVFISSEGGEAAEKAKAII) is the KH domain. The 73-residue stretch at 658 to 730 (GETYNGKVVK…DRGKISLAIP (73 aa)) folds into the S1 motif domain. Residues 727–913 (LAIPGFEDQE…VRRDFDPFED (187 aa)) are disordered. Basic and acidic residues-rich tracts occupy residues 742–789 (SRGD…RRSD), 797–865 (DRPR…DRRG), and 872–898 (RGSD…ERTE).

This sequence belongs to the polyribonucleotide nucleotidyltransferase family. Requires Mg(2+) as cofactor.

It is found in the cytoplasm. The catalysed reaction is RNA(n+1) + phosphate = RNA(n) + a ribonucleoside 5'-diphosphate. Its function is as follows. Involved in mRNA degradation. Catalyzes the phosphorolysis of single-stranded polyribonucleotides processively in the 3'- to 5'-direction. In Bifidobacterium longum (strain DJO10A), this protein is Polyribonucleotide nucleotidyltransferase.